The primary structure comprises 202 residues: Pyridoxal 5'-phosphate synthase subunit PdxT (202 aa).

Glycine 49–serine 51 serves as a coordination point for L-glutamine. Residue cysteine 81 is the Nucleophile of the active site. Residues arginine 110 and isoleucine 139–arginine 140 contribute to the L-glutamine site. Residues histidine 182 and glutamate 184 each act as charge relay system in the active site.

The protein belongs to the glutaminase PdxT/SNO family. In terms of assembly, in the presence of PdxS, forms a dodecamer of heterodimers. Only shows activity in the heterodimer.

The catalysed reaction is aldehydo-D-ribose 5-phosphate + D-glyceraldehyde 3-phosphate + L-glutamine = pyridoxal 5'-phosphate + L-glutamate + phosphate + 3 H2O + H(+). The enzyme catalyses L-glutamine + H2O = L-glutamate + NH4(+). Its pathway is cofactor biosynthesis; pyridoxal 5'-phosphate biosynthesis. Functionally, catalyzes the hydrolysis of glutamine to glutamate and ammonia as part of the biosynthesis of pyridoxal 5'-phosphate. The resulting ammonia molecule is channeled to the active site of PdxS. The sequence is that of Pyridoxal 5'-phosphate synthase subunit PdxT from Rhodococcus opacus (strain B4).